Consider the following 290-residue polypeptide: Formamidopyrimidine-DNA glycosylase (290 aa).

Pro2 acts as the Schiff-base intermediate with DNA in catalysis. Glu3 functions as the Proton donor in the catalytic mechanism. Residue Lys58 is the Proton donor; for beta-elimination activity of the active site. DNA-binding residues include His97, Arg122, and Lys165. An FPG-type; atypical zinc finger spans residues 250-290 (KVYGREGEPCPGCDCDPVRTGGIARIVQSGRSTFYCPRHQR). Arg280 serves as the catalytic Proton donor; for delta-elimination activity.

The protein belongs to the FPG family. In terms of assembly, monomer. Zn(2+) is required as a cofactor.

It catalyses the reaction Hydrolysis of DNA containing ring-opened 7-methylguanine residues, releasing 2,6-diamino-4-hydroxy-5-(N-methyl)formamidopyrimidine.. It carries out the reaction 2'-deoxyribonucleotide-(2'-deoxyribose 5'-phosphate)-2'-deoxyribonucleotide-DNA = a 3'-end 2'-deoxyribonucleotide-(2,3-dehydro-2,3-deoxyribose 5'-phosphate)-DNA + a 5'-end 5'-phospho-2'-deoxyribonucleoside-DNA + H(+). Its function is as follows. Involved in base excision repair of DNA damaged by oxidation or by mutagenic agents. Acts as a DNA glycosylase that recognizes and removes damaged bases. Has a preference for oxidized purines, such as 7,8-dihydro-8-oxoguanine (8-oxoG). Has AP (apurinic/apyrimidinic) lyase activity and introduces nicks in the DNA strand. Cleaves the DNA backbone by beta-delta elimination to generate a single-strand break at the site of the removed base with both 3'- and 5'-phosphates. The polypeptide is Formamidopyrimidine-DNA glycosylase (Rhodospirillum centenum (strain ATCC 51521 / SW)).